The sequence spans 351 residues: Dihydroorotate dehydrogenase (quinone) (351 aa).

FMN is bound by residues 61–65 (AGLDK) and Thr-85. Position 65 (Lys-65) interacts with substrate. 110–114 (NRMGF) serves as a coordination point for substrate. FMN contacts are provided by Asn-139 and Asn-172. Asn-172 serves as a coordination point for substrate. Ser-175 acts as the Nucleophile in catalysis. Residue Asn-177 coordinates substrate. FMN contacts are provided by Lys-217 and Thr-245. Substrate is bound at residue 246–247 (NT). FMN is bound by residues Gly-268, Gly-297, and 318-319 (YS).

It belongs to the dihydroorotate dehydrogenase family. Type 2 subfamily. Monomer. Requires FMN as cofactor.

The protein localises to the cell membrane. It catalyses the reaction (S)-dihydroorotate + a quinone = orotate + a quinol. It participates in pyrimidine metabolism; UMP biosynthesis via de novo pathway; orotate from (S)-dihydroorotate (quinone route): step 1/1. Functionally, catalyzes the conversion of dihydroorotate to orotate with quinone as electron acceptor. The chain is Dihydroorotate dehydrogenase (quinone) from Xanthomonas oryzae pv. oryzae (strain PXO99A).